The primary structure comprises 138 residues: Basic phospholipase A2 homolog Tpu-K49a (138 aa).

Residues 1–16 (MRTLWIMAVLLVGVEG) form the signal peptide. 6 disulfide bridges follow: C42–C131, C44–C60, C59–C111, C65–C138, C66–C104, and C91–C102. The segment at 121 to 133 (KKERINTKIFCKK) is important for membrane-damaging activities in eukaryotes and bacteria; heparin-binding.

Monomer. Expressed by the venom gland.

The protein localises to the secreted. Its function is as follows. Snake venom phospholipase A2 homolog that lacks catalytic activity. Induces local edema a few hours after injection in the hind foot. Is myotoxic. A model of myotoxic mechanism has been proposed: an apo Lys49-PLA2 is activated by the entrance of a hydrophobic molecule (e.g. fatty acid) at the hydrophobic channel of the protein leading to a reorientation of a monomer. This reorientation causes a transition between 'inactive' to 'active' states, causing alignment of C-terminal and membrane-docking sites (MDoS) side-by-side and putting the membrane-disruption sites (MDiS) in the same plane, exposed to solvent and in a symmetric position for both monomers. The MDoS region stabilizes the toxin on membrane by the interaction of charged residues with phospholipid head groups. Subsequently, the MDiS region destabilizes the membrane with penetration of hydrophobic residues. This insertion causes a disorganization of the membrane, allowing an uncontrolled influx of ions (i.e. calcium and sodium), and eventually triggering irreversible intracellular alterations and cell death. This chain is Basic phospholipase A2 homolog Tpu-K49a, found in Craspedocephalus puniceus (Flat-nosed pitviper).